We begin with the raw amino-acid sequence, 202 residues long: Regulator of G-protein signaling 16 (202 aa).

S-palmitoyl cysteine attachment occurs at residues Cys2 and Cys12. The RGS domain maps to 65 to 181; it reads SFDLLLSSKN…LKSPAYRDLA (117 aa). At Tyr168 the chain carries Phosphotyrosine; by EGFR. Tyr177 carries the phosphotyrosine modification. The tract at residues 183 to 202 is disordered; it reads QATAASASPSSSSPAEPLHT.

In terms of assembly, interacts with GNAI1 and GNAQ. Interacts with GNAI3, GNAI3 and GNAO1. Palmitoylated on Cys-2 and/or Cys-12. Post-translationally, phosphorylated. Phosphorylation at Tyr-168 by EGFR enhances GTPase accelerating (GAP) activity toward GNAI1.

The protein resides in the membrane. Functionally, regulates G protein-coupled receptor signaling cascades. Inhibits signal transduction by increasing the GTPase activity of G protein alpha subunits, thereby driving them into their inactive GDP-bound form. Plays an important role in the phototransduction cascade by regulating the lifetime and effective concentration of activated transducin alpha. May regulate extra and intracellular mitogenic signals. The sequence is that of Regulator of G-protein signaling 16 (RGS16) from Bos taurus (Bovine).